The chain runs to 509 residues: 2,3-bisphosphoglycerate-independent phosphoglycerate mutase (509 aa).

Positions 12 and 62 each coordinate Mn(2+). The active-site Phosphoserine intermediate is the Ser62. Residues His123, 153 to 154 (RD), Arg185, Arg191, 260 to 263 (RPDR), and Lys333 contribute to the substrate site. Asp400, His404, Asp441, His442, and His460 together coordinate Mn(2+).

The protein belongs to the BPG-independent phosphoglycerate mutase family. In terms of assembly, monomer. Mn(2+) is required as a cofactor.

It catalyses the reaction (2R)-2-phosphoglycerate = (2R)-3-phosphoglycerate. It participates in carbohydrate degradation; glycolysis; pyruvate from D-glyceraldehyde 3-phosphate: step 3/5. Its function is as follows. Catalyzes the interconversion of 2-phosphoglycerate and 3-phosphoglycerate. The sequence is that of 2,3-bisphosphoglycerate-independent phosphoglycerate mutase from Clostridium botulinum (strain ATCC 19397 / Type A).